Here is a 300-residue protein sequence, read N- to C-terminus: Integrin-binding sialoprotein (300 aa).

The disordered stretch occupies residues 41-258; it reads RFPVQSSSDS…YEQTGAHEYD (218 aa). A phosphoserine mark is found at S46, S51, S59, S60, S82, and S90. The segment covering 46–58 has biased composition (low complexity); that stretch reads SSSDSSEENGNGD. Over residues 59-92 the composition is skewed to acidic residues; sequence SSEEEEEEEENSNEEENNEENEDSDGNEDEDSEA. Positions 93 to 102 are enriched in polar residues; it reads ENITLSTTTL. N-linked (GlcNAc...) asparagine glycosylation is present at N94. Residues 125–136 are compositionally biased toward basic and acidic residues; that stretch reads KAGDIGKKSAKE. The segment covering 137-160 has biased composition (acidic residues); sequence EESDEDEEEEEENEENEAEVDDNE. Residue S139 is modified to Phosphoserine. Polar residues-rich tracts occupy residues 161-173, 193-202, and 229-243; these read QGTN…STEV, VTEAQGTTVA, and ISGT…TTTP. N-linked (GlcNAc...) asparagine glycans are attached at residues N164 and N169. Phosphoserine is present on S266. Residues 272–274 carry the Integrin-binding motif motif; that stretch reads RGD. Phosphoserine is present on S293. Residues Y299 and Y300 each carry the sulfotyrosine modification.

Monomer. Interacts with integrins; the interaction promotes cell adhesion.

Its subcellular location is the secreted. In terms of biological role, binds tightly to hydroxyapatite. Appears to form an integral part of the mineralized matrix. Probably important to cell-matrix interaction. Promotes adhesion and migration of various cells via the alpha-V/beta-3 integrin receptor (ITGAV:ITGB3). The protein is Integrin-binding sialoprotein (IBSP) of Sus scrofa (Pig).